Here is a 99-residue protein sequence, read N- to C-terminus: U11-barytoxin-Tl1a (99 aa).

The signal sequence occupies residues 1–21; it reads MKTLVLVAVLGLASLYLLSYA. Positions 22–50 are excised as a propeptide; it reads SEVQQISRDEEDFRALMASFGGIFDTEER. Intrachain disulfides connect Cys-57/Cys-71, Cys-64/Cys-76, and Cys-70/Cys-90.

The protein belongs to the neurotoxin 10 (Hwtx-1) family. 25 (ICK4) subfamily. Expressed by the venom gland.

The protein localises to the secreted. In terms of biological role, ion channel inhibitor. The protein is U11-barytoxin-Tl1a of Trittame loki (Brush-footed trapdoor spider).